A 246-amino-acid polypeptide reads, in one-letter code: mRNA-decapping protein g5R (246 aa).

The region spanning 91 to 239 is the Nudix hydrolase domain; that stretch reads KYQKFKKNWL…IIGPAFNFIK (149 aa). The Nudix box motif lies at 128 to 149; the sequence is GKPKENESDLACAIREFEEETG. Glu-134 lines the Mg(2+) pocket. Glu-143 serves as the catalytic Nucleophile. Positions 147 and 169 each coordinate Mg(2+).

This sequence belongs to the Nudix hydrolase family. DIPP subfamily. In terms of assembly, interacts with host RPL23A. Mg(2+) is required as a cofactor. Mn(2+) serves as cofactor.

It localises to the host rough endoplasmic reticulum. The catalysed reaction is diphospho-myo-inositol polyphosphate + H2O = myo-inositol polyphosphate + phosphate.. Functionally, decapping enzyme required for the removal of the 5'-end m7GpppN cap tethered to viral and host mRNAs to allow their decay in cells. May therefore accelerate viral and cellular mRNA turnover to eliminate competing host mRNAs and allow stage-specific synthesis of viral proteins. Acceleration of the turnover of cellular transcripts may even promote the shutoff of host protein synthesis. In addition to the mRNA cap, g5R also efficiently hydrolyzes diphosphoinositol polyphosphates. Down-regulation of the level of PP-InsP5 (diphosphoinositol pentakisphosphate) may play a role in viral manipulation of the cellular secretory pathway, a step necessary for the formation of virions. Binds viral and cellular poly(A) mRNAs, thereby decreasing both types of mRNAs. This African swine fever virus (isolate Pig/Kenya/KEN-50/1950) (ASFV) protein is mRNA-decapping protein g5R.